A 662-amino-acid chain; its full sequence is DNA ligase (662 aa).

NAD(+) contacts are provided by residues 32-36, 81-82, and Glu-112; these read DAEYD and SL. The active-site N6-AMP-lysine intermediate is the Lys-114. Positions 135, 170, 286, and 310 each coordinate NAD(+). 4 residues coordinate Zn(2+): Cys-402, Cys-405, Cys-420, and Cys-425. The BRCT domain maps to 583–662; it reads PKGGPLTGST…AELHAMLRGE (80 aa).

Belongs to the NAD-dependent DNA ligase family. LigA subfamily. The cofactor is Mg(2+). It depends on Mn(2+) as a cofactor.

The catalysed reaction is NAD(+) + (deoxyribonucleotide)n-3'-hydroxyl + 5'-phospho-(deoxyribonucleotide)m = (deoxyribonucleotide)n+m + AMP + beta-nicotinamide D-nucleotide.. Its function is as follows. DNA ligase that catalyzes the formation of phosphodiester linkages between 5'-phosphoryl and 3'-hydroxyl groups in double-stranded DNA using NAD as a coenzyme and as the energy source for the reaction. It is essential for DNA replication and repair of damaged DNA. The protein is DNA ligase of Solibacter usitatus (strain Ellin6076).